Consider the following 262-residue polypeptide: 2-keto-4-pentenoate hydratase (262 aa).

The protein belongs to the hydratase/decarboxylase family. MhpD subfamily. The cofactor is a divalent metal cation.

It catalyses the reaction (S)-4-hydroxy-2-oxopentanoate = (2Z)-2-hydroxypenta-2,4-dienoate + H2O. It participates in aromatic compound metabolism; 3-phenylpropanoate degradation. Its function is as follows. Catalyzes the conversion of 2-hydroxypentadienoic acid (enolic form of 2-oxopent-4-enoate) to 4-hydroxy-2-ketopentanoic acid. This chain is 2-keto-4-pentenoate hydratase, found in Paraburkholderia phymatum (strain DSM 17167 / CIP 108236 / LMG 21445 / STM815) (Burkholderia phymatum).